Here is a 798-residue protein sequence, read N- to C-terminus: Serine/threonine-protein kinase SIK2 (798 aa).

A Protein kinase domain is found at 26-277 (YDIERTLGKG…ISQIKQHKWM (252 aa)). ATP-binding positions include 32–40 (LGKGNFAVV) and Lys55. Asp148 acts as the Proton acceptor in catalysis. Phosphothreonine is present on Thr181. Residue Ser185 is modified to Phosphoserine. One can recognise a UBA domain in the interval 302 to 342 (DYNEQVLGIMQTLGIDRQRTVESLQNSSYNHFAAIYYLLLE). The span at 351-361 (QLSSRPATGRQ) shows a compositional bias: polar residues. Residues 351–382 (QLSSRPATGRQQRPRSSEISNAEMPQDSLTSE) are disordered. Position 575 is a phosphoserine (Ser575). Residues 672-691 (ACPQTSQTSATNGLPPSDSA) are disordered. Positions 673 to 685 (CPQTSQTSATNGL) are enriched in polar residues.

Belongs to the protein kinase superfamily. CAMK Ser/Thr protein kinase family. SNF1 subfamily. It depends on Mg(2+) as a cofactor. In terms of processing, phosphorylated at Thr-181 by STK11/LKB1 in complex with STE20-related adapter-alpha (STRADA) pseudo kinase and CAB39. Ubiquitously expressed in embryonic tissue.

It localises to the cytoplasm. It catalyses the reaction L-seryl-[protein] + ATP = O-phospho-L-seryl-[protein] + ADP + H(+). It carries out the reaction L-threonyl-[protein] + ATP = O-phospho-L-threonyl-[protein] + ADP + H(+). Its activity is regulated as follows. Activated by phosphorylation on Thr-181. Its function is as follows. Phosphorylates IRS1 in insulin-stimulated adipocytes, potentially modulating the efficiency of insulin signal transduction. Inhibits CREB activity by phosphorylating and repressing the CREB-specific coactivators, CRTC1-3. This is Serine/threonine-protein kinase SIK2 (SIK2) from Gallus gallus (Chicken).